The following is a 130-amino-acid chain: Small ribosomal subunit protein uS8 (130 aa).

Belongs to the universal ribosomal protein uS8 family. Part of the 30S ribosomal subunit. Contacts proteins S5 and S12.

Functionally, one of the primary rRNA binding proteins, it binds directly to 16S rRNA central domain where it helps coordinate assembly of the platform of the 30S subunit. The chain is Small ribosomal subunit protein uS8 from Buchnera aphidicola subsp. Baizongia pistaciae (strain Bp).